Here is a 94-residue protein sequence, read N- to C-terminus: MSEQNSRPQNSERPQRSRRPQGGPRRRRKVDFIAANHIEYIDYKNTELLERFISERGKILPRRVTGTSAKNQRKVTTAIKRARIMALLPFVTED.

Residues 1–12 (MSEQNSRPQNSE) are compositionally biased toward low complexity. Positions 1 to 29 (MSEQNSRPQNSERPQRSRRPQGGPRRRRK) are disordered. The segment covering 16–29 (RSRRPQGGPRRRRK) has biased composition (basic residues).

This sequence belongs to the bacterial ribosomal protein bS18 family. Part of the 30S ribosomal subunit. Forms a tight heterodimer with protein bS6.

Binds as a heterodimer with protein bS6 to the central domain of the 16S rRNA, where it helps stabilize the platform of the 30S subunit. The sequence is that of Small ribosomal subunit protein bS18 from Leuconostoc mesenteroides subsp. mesenteroides (strain ATCC 8293 / DSM 20343 / BCRC 11652 / CCM 1803 / JCM 6124 / NCDO 523 / NBRC 100496 / NCIMB 8023 / NCTC 12954 / NRRL B-1118 / 37Y).